The sequence spans 379 residues: Cytochrome b (379 aa).

Helical transmembrane passes span 33 to 53 (LGSLLGTCLIMQILTGLFLAM), 77 to 98 (WTIRHLHANGASMFFMCLYLHI), 113 to 133 (WNTGVMLLLTVMATAFMGYVL), and 178 to 198 (FFTLHFIAPFIILALVLTHLL). Heme b contacts are provided by His-83 and His-97. The heme b site is built by His-182 and His-196. His-201 provides a ligand contact to a ubiquinone. A run of 4 helical transmembrane segments spans residues 226 to 246 (IKDILGLLIMILTTLALTLLH), 288 to 308 (LGGVLTLICSILVLVIIPMTH), 320 to 340 (ISQCLFWILTADLLILTWIGG), and 347 to 367 (FTTIGLLASILYFTTILILTP).

Belongs to the cytochrome b family. The cytochrome bc1 complex contains 11 subunits: 3 respiratory subunits (MT-CYB, CYC1 and UQCRFS1), 2 core proteins (UQCRC1 and UQCRC2) and 6 low-molecular weight proteins (UQCRH/QCR6, UQCRB/QCR7, UQCRQ/QCR8, UQCR10/QCR9, UQCR11/QCR10 and a cleavage product of UQCRFS1). This cytochrome bc1 complex then forms a dimer. Heme b is required as a cofactor.

It localises to the mitochondrion inner membrane. Functionally, component of the ubiquinol-cytochrome c reductase complex (complex III or cytochrome b-c1 complex) that is part of the mitochondrial respiratory chain. The b-c1 complex mediates electron transfer from ubiquinol to cytochrome c. Contributes to the generation of a proton gradient across the mitochondrial membrane that is then used for ATP synthesis. This chain is Cytochrome b (MT-CYB), found in Bradypus tridactylus (Pale-throated three-toed sloth).